The chain runs to 258 residues: Phosphoadenosine 5'-phosphosulfate reductase (258 aa).

Cys244 acts as the Nucleophile; cysteine thiosulfonate intermediate in catalysis.

Belongs to the PAPS reductase family. CysH subfamily.

Its subcellular location is the cytoplasm. The enzyme catalyses [thioredoxin]-disulfide + sulfite + adenosine 3',5'-bisphosphate + 2 H(+) = [thioredoxin]-dithiol + 3'-phosphoadenylyl sulfate. Its pathway is sulfur metabolism; hydrogen sulfide biosynthesis; sulfite from sulfate: step 3/3. In terms of biological role, catalyzes the formation of sulfite from phosphoadenosine 5'-phosphosulfate (PAPS) using thioredoxin as an electron donor. The protein is Phosphoadenosine 5'-phosphosulfate reductase of Vibrio vulnificus (strain CMCP6).